Reading from the N-terminus, the 497-residue chain is Galactose-1-phosphate uridylyltransferase (497 aa).

The protein belongs to the galactose-1-phosphate uridylyltransferase type 2 family.

It is found in the cytoplasm. It carries out the reaction alpha-D-galactose 1-phosphate + UDP-alpha-D-glucose = alpha-D-glucose 1-phosphate + UDP-alpha-D-galactose. Its pathway is carbohydrate metabolism; galactose metabolism. The polypeptide is Galactose-1-phosphate uridylyltransferase (Clostridium acetobutylicum (strain ATCC 824 / DSM 792 / JCM 1419 / IAM 19013 / LMG 5710 / NBRC 13948 / NRRL B-527 / VKM B-1787 / 2291 / W)).